The following is a 124-amino-acid chain: UPF0225 protein SCO1677 (124 aa).

This sequence belongs to the UPF0225 family.

The polypeptide is UPF0225 protein SCO1677 (Streptomyces coelicolor (strain ATCC BAA-471 / A3(2) / M145)).